The primary structure comprises 399 residues: L-2-hydroxyglutarate dehydrogenase (399 aa).

This sequence belongs to the L2HGDH family. The cofactor is FAD.

It catalyses the reaction (S)-2-hydroxyglutarate + A = 2-oxoglutarate + AH2. Its function is as follows. Catalyzes the dehydrogenation of L-2-hydroxyglutarate (L2HG or(S)-2-hydroxyglutarate) to 2-oxoglutarate (alpha-ketoglutarate). Active in vitro with the artificial electron acceptor 2,6-dichlorophenolindophenol (DCPIP). Also displays a very low oxidase activity in vitro on L-2-hydroxyglutarate with O2 as the electron acceptor, but this activity is most likely not physiological. In Indibacter alkaliphilus (strain CCUG 57479 / KCTC 22604 / LW1), this protein is L-2-hydroxyglutarate dehydrogenase.